The following is a 421-amino-acid chain: Osmoprotective compounds-binding protein GgtB (421 aa).

The signal sequence occupies residues 1 to 18 (MKFFKITTLIISLIVLTS). Residue Cys-19 is the site of N-palmitoyl cysteine attachment. Cys-19 carries the S-diacylglycerol cysteine lipid modification.

It belongs to the bacterial solute-binding protein 1 family. The complex is composed of two ATP-binding proteins (GgtA), two transmembrane proteins (GgtC and GgtD) and a solute-binding protein (GgtB).

It localises to the cell membrane. Its function is as follows. Part of the ABC transporter complex GgtABCD involved in the uptake of the osmoprotective compounds glucosylglycerol (GG), sucrose and trehalose. Binds glucosylglycerol and exhibits a somewhat lower affinity towards sucrose and a substantially lower affinity towards trehalose. The polypeptide is Osmoprotective compounds-binding protein GgtB (Synechocystis sp. (strain ATCC 27184 / PCC 6803 / Kazusa)).